Here is a 119-residue protein sequence, read N- to C-terminus: MORF4 family associated protein 1 like 2 (119 aa).

A compositionally biased stretch (basic and acidic residues) spans 1 to 16 (MRPVDADEAREPREEP). The disordered stretch occupies residues 1 to 36 (MRPVDADEAREPREEPGSPLSPAPRAGRENLASLER).

This sequence belongs to the MORF4 family-associated protein family. As to quaternary structure, may interact with CDK2AP1.

In terms of biological role, may play a role in cell proliferation. The protein is MORF4 family associated protein 1 like 2 of Homo sapiens (Human).